Reading from the N-terminus, the 795-residue chain is Protocadherin beta-5 (795 aa).

Residues 1–30 (METALAKTPQKRQVMFLAILLLLWEAGSEA) form the signal peptide. Residues 31 to 689 (VRYSIPEETE…AQADSLTVYL (659 aa)) lie on the Extracellular side of the membrane. 5 consecutive Cadherin domains span residues 35–133 (IPEE…SPEF), 138–242 (MLLK…APEF), 247–346 (YEVQ…APEL), 351–450 (LSSP…APAF), and 455–560 (YTLF…SPFV). Asparagine 169 is a glycosylation site (N-linked (GlcNAc...) asparagine). Lysine 296 carries the post-translational modification N6-acetyllysine. Residues asparagine 417 and asparagine 435 are each glycosylated (N-linked (GlcNAc...) asparagine). N-linked (GlcNAc...) asparagine glycosylation is present at asparagine 566. Residues 567–670 (GSAPCTELVP…LVDGFSQPYL (104 aa)) enclose the Cadherin 6 domain. A helical membrane pass occupies residues 690 to 710 (VVALASVSSLFLFSVLLFVAV). At 711–795 (RLCRRSRAAP…AAFRNSFGLN (85 aa)) the chain is on the cytoplasmic side.

It is found in the cell membrane. In terms of biological role, potential calcium-dependent cell-adhesion protein. May be involved in the establishment and maintenance of specific neuronal connections in the brain. This Pan troglodytes (Chimpanzee) protein is Protocadherin beta-5 (PCDHB5).